The primary structure comprises 288 residues: 33 kDa chaperonin (288 aa).

2 cysteine pairs are disulfide-bonded: C235–C237 and C268–C271.

This sequence belongs to the HSP33 family. Under oxidizing conditions two disulfide bonds are formed involving the reactive cysteines. Under reducing conditions zinc is bound to the reactive cysteines and the protein is inactive.

It is found in the cytoplasm. Redox regulated molecular chaperone. Protects both thermally unfolding and oxidatively damaged proteins from irreversible aggregation. Plays an important role in the bacterial defense system toward oxidative stress. The sequence is that of 33 kDa chaperonin from Streptococcus thermophilus (strain ATCC BAA-250 / LMG 18311).